The chain runs to 335 residues: Pharynx and intestine in excess protein 1 (335 aa).

Residue Lys68 forms a Glycyl lysine isopeptide (Lys-Gly) (interchain with G-Cter in SUMO) linkage. Residues 98–126 (EYKTRLCDAFRREGYCPYNDNCTYAHGQD) form a C3H1-type 1 zinc finger. Residues 130–156 (VPRRRQEYYSRDPPRERRDSRSRRDDV) show a composition bias toward basic and acidic residues. The segment at 130–188 (VPRRRQEYYSRDPPRERRDSRSRRDDVDTTINRSSSSASKHHDENRRPSNNHGSSNRRQ) is disordered. 2 stretches are compositionally biased toward polar residues: residues 158-167 (TTINRSSSSA) and 177-187 (PSNNHGSSNRR). Residues 184–211 (SNRRQICHNFERGNCRYGPRCRFIHVEQ) form a C3H1-type 2 zinc finger. The tract at residues 288–291 (MAPT) is required for inhibition of Ser-2 phosphorylation.

Interacts with hda-1, let-418 and mep-1. Interacts (via C terminus) with cit-1.1 (via C terminus). In terms of processing, sumoylated in adult germ cells.

It is found in the nucleus. The protein resides in the cytoplasm. It localises to the cytoskeleton. Its subcellular location is the microtubule organizing center. The protein localises to the centrosome. It is found in the spindle. The protein resides in the cytoplasmic granule. In terms of biological role, maternally provided pie-1 is required for germline cell fate determination. Functions as a repressor of RNA polymerase II-dependent gene expression in the developing germline. Required for expression of nos-2 in P4 germline blastomere cells. Inhibits the histone deacetylase activity of hda-1. Represses transcriptional activation of cdk-9 and cit-1.1, which are members of the P-TEFb complex. Acts redundantly with gei-17 to promote piRNA-mediated silencing and fertility in adult germline. Promotes the sumoylation of hda-1 in adult animals but not in embryos thereby regulating its interaction with mep-1. The chain is Pharynx and intestine in excess protein 1 from Caenorhabditis elegans.